We begin with the raw amino-acid sequence, 103 residues long: MFKKIGVVGDKDSVLAFKALGIDVFPVVGNEEAKKTVDKLAKNDYAVVFVTEHVAQGIEETIERYNKEVLPAVILIPSNQGTLNIGMQRISDNVEKAVGVNIL.

Belongs to the V-ATPase F subunit family.

Its function is as follows. Produces ATP from ADP in the presence of a proton gradient across the membrane. In Clostridium botulinum (strain Alaska E43 / Type E3), this protein is V-type ATP synthase subunit F.